Here is a 261-residue protein sequence, read N- to C-terminus: Glucosamine-6-phosphate deaminase (261 aa).

The active-site Proton acceptor; for enolization step is the aspartate 67. Aspartate 136 (for ring-opening step) is an active-site residue. Histidine 138 serves as the catalytic Proton acceptor; for ring-opening step. The active-site For ring-opening step is glutamate 143.

The protein belongs to the glucosamine/galactosamine-6-phosphate isomerase family. NagB subfamily.

The catalysed reaction is alpha-D-glucosamine 6-phosphate + H2O = beta-D-fructose 6-phosphate + NH4(+). The protein operates within amino-sugar metabolism; N-acetylneuraminate degradation; D-fructose 6-phosphate from N-acetylneuraminate: step 5/5. Its function is as follows. Catalyzes the reversible isomerization-deamination of glucosamine 6-phosphate (GlcN6P) to form fructose 6-phosphate (Fru6P) and ammonium ion. This chain is Glucosamine-6-phosphate deaminase, found in Streptomyces avermitilis (strain ATCC 31267 / DSM 46492 / JCM 5070 / NBRC 14893 / NCIMB 12804 / NRRL 8165 / MA-4680).